A 30-amino-acid chain; its full sequence is Cytochrome c oxidase subunit 5C (30 aa).

A helical transmembrane segment spans residues 15–30 (VVKELVIXXXLGLXAG).

This sequence belongs to the cytochrome c oxidase subunit 5C family.

The protein resides in the mitochondrion inner membrane. In terms of biological role, this protein is one of the nuclear-coded polypeptide chains of cytochrome c oxidase, the terminal oxidase in mitochondrial electron transport. The sequence is that of Cytochrome c oxidase subunit 5C (COX5C) from Solanum tuberosum (Potato).